Consider the following 406-residue polypeptide: Probable tRNA sulfurtransferase (406 aa).

Residues 60–162 (PEAKARLQDT…PGAALLEVER (103 aa)) form the THUMP domain. ATP is bound by residues 180-181 (LL), 205-206 (HF), Arg-262, Gly-284, and Gln-293.

The protein belongs to the ThiI family.

The protein localises to the cytoplasm. It catalyses the reaction [ThiI sulfur-carrier protein]-S-sulfanyl-L-cysteine + a uridine in tRNA + 2 reduced [2Fe-2S]-[ferredoxin] + ATP + H(+) = [ThiI sulfur-carrier protein]-L-cysteine + a 4-thiouridine in tRNA + 2 oxidized [2Fe-2S]-[ferredoxin] + AMP + diphosphate. It carries out the reaction [ThiS sulfur-carrier protein]-C-terminal Gly-Gly-AMP + S-sulfanyl-L-cysteinyl-[cysteine desulfurase] + AH2 = [ThiS sulfur-carrier protein]-C-terminal-Gly-aminoethanethioate + L-cysteinyl-[cysteine desulfurase] + A + AMP + 2 H(+). Its pathway is cofactor biosynthesis; thiamine diphosphate biosynthesis. In terms of biological role, catalyzes the ATP-dependent transfer of a sulfur to tRNA to produce 4-thiouridine in position 8 of tRNAs, which functions as a near-UV photosensor. Also catalyzes the transfer of sulfur to the sulfur carrier protein ThiS, forming ThiS-thiocarboxylate. This is a step in the synthesis of thiazole, in the thiamine biosynthesis pathway. The sulfur is donated as persulfide by IscS. This chain is Probable tRNA sulfurtransferase, found in Thermus thermophilus (strain ATCC 27634 / DSM 579 / HB8).